Here is a 352-residue protein sequence, read N- to C-terminus: Extracellular minor metalloprotease (352 aa).

Disordered stretches follow at residues 41–86 and 144–164; these read GNKP…QPRR and TARS…ELTH. Residues 48-57 show a composition bias toward basic and acidic residues; it reads PTEKNARAGE. 2 stretches are compositionally biased toward low complexity: residues 71-85 and 144-156; these read ARQT…QQPR and TARS…SPST. Histidine 160 lines the Zn(2+) pocket. Glutamate 161 is an active-site residue. Positions 164 and 184 each coordinate Zn(2+). Catalysis depends on histidine 262, which acts as the Proton donor. Positions 303–325 are disordered; sequence TPTSDHLRPRHGETRAGLRTKRG. Basic and acidic residues predominate over residues 304-325; it reads PTSDHLRPRHGETRAGLRTKRG.

The protein belongs to the peptidase M4 family. Requires Zn(2+) as cofactor.

The protein localises to the secreted. This is Extracellular minor metalloprotease (smp) from Serratia marcescens (strain ATCC 21074 / E-15).